The chain runs to 396 residues: Elongation factor Tu 2 (396 aa).

Residues 10–206 (KPHVNVGTIG…ALDTYIPTPE (197 aa)) enclose the tr-type G domain. The segment at 19–26 (GHVDHGKT) is G1. 19–26 (GHVDHGKT) contributes to the GTP binding site. Thr-26 contacts Mg(2+). Residues 60–64 (GITIN) form a G2 region. The segment at 81–84 (DCPG) is G3. Residues 81–85 (DCPGH) and 136–139 (NKCD) each bind GTP. A G4 region spans residues 136–139 (NKCD). Residues 174 to 176 (SAK) form a G5 region.

This sequence belongs to the TRAFAC class translation factor GTPase superfamily. Classic translation factor GTPase family. EF-Tu/EF-1A subfamily. In terms of assembly, monomer.

Its subcellular location is the cytoplasm. The catalysed reaction is GTP + H2O = GDP + phosphate + H(+). GTP hydrolase that promotes the GTP-dependent binding of aminoacyl-tRNA to the A-site of ribosomes during protein biosynthesis. This Acidovorax sp. (strain JS42) protein is Elongation factor Tu 2.